A 521-amino-acid chain; its full sequence is Forkhead box protein N4 (521 aa).

The segment at residues K197–D293 is a DNA-binding region (fork-head). The interval P371–R406 is disordered.

As to expression, mainly expressed in proliferator progenitor cells in brain and retina rather than differentiated cells. In contrast, is expressed only in postmitotic epithelial cells rather than in proliferative progenitors in the proximal airway.

The protein resides in the nucleus. Its function is as follows. Transcription factor essential for neural and some non-neural tissues development, such as retina and lung respectively. Binds to an 11-bp consensus sequence containing the invariant tetranucleotide 5'-ACGC-3'. During development of the central nervous system, is required to specify the amacrine and horizontal cell fates from multipotent retinal progenitors while suppressing the alternative photoreceptor cell fates through activating DLL4-NOTCH signaling. Also acts synergistically with ASCL1/MASH1 to activate DLL4-NOTCH signaling and drive commitment of p2 progenitors to the V2b interneuron fates during spinal cord neurogenesis. In development of non-neural tissues, plays an essential role in the specification of the atrioventricular canal and is indirectly required for patterning the distal airway during lung development. This Mus musculus (Mouse) protein is Forkhead box protein N4 (Foxn4).